A 373-amino-acid chain; its full sequence is PqqA peptide cyclase (373 aa).

The Radical SAM core domain occupies 9-224 (LTKPRWLLAE…QSYKEKVKGR (216 aa)). Positions 23, 27, and 30 each coordinate [4Fe-4S] cluster.

It belongs to the radical SAM superfamily. PqqE family. As to quaternary structure, interacts with PqqD. The interaction is necessary for activity of PqqE. [4Fe-4S] cluster serves as cofactor.

It catalyses the reaction [PQQ precursor protein] + S-adenosyl-L-methionine = E-Y cross-linked-[PQQ precursor protein] + 5'-deoxyadenosine + L-methionine + H(+). It functions in the pathway cofactor biosynthesis; pyrroloquinoline quinone biosynthesis. In terms of biological role, catalyzes the cross-linking of a glutamate residue and a tyrosine residue in the PqqA protein as part of the biosynthesis of pyrroloquinoline quinone (PQQ). The sequence is that of PqqA peptide cyclase from Methylococcus capsulatus (strain ATCC 33009 / NCIMB 11132 / Bath).